Reading from the N-terminus, the 502-residue chain is Membrane protein insertase YidC (502 aa).

The next 6 helical transmembrane spans lie at 12 to 32 (FLIF…FYIY), 286 to 306 (LDWG…YWIY), 312 to 332 (WVLS…PLGY), 382 to 402 (LPIL…IITV), 409 to 429 (FLWI…VIMG), and 452 to 472 (ITSV…VLYW).

It belongs to the OXA1/ALB3/YidC family. Type 1 subfamily. In terms of assembly, interacts with the Sec translocase complex via SecD. Specifically interacts with transmembrane segments of nascent integral membrane proteins during membrane integration.

Its subcellular location is the cell membrane. In terms of biological role, required for the insertion and/or proper folding and/or complex formation of integral membrane proteins into the membrane. Involved in integration of membrane proteins that insert both dependently and independently of the Sec translocase complex, as well as at least some lipoproteins. Aids folding of multispanning membrane proteins. The sequence is that of Membrane protein insertase YidC from Aquifex aeolicus (strain VF5).